Reading from the N-terminus, the 723-residue chain is Polyribonucleotide nucleotidyltransferase (723 aa).

D488 and D494 together coordinate Mg(2+). A KH domain is found at 555-614 (PKIITLNIKPEKIKDVIGPGGKQINAIIDETGVKIDIEQDGTVYIASQDQAMNRKAIAII). Residues 624–692 (GEVYTGKVRR…QQGRVNLSRK (69 aa)) form the S1 motif domain. The interval 692–723 (KALLEKKEQPEGDKKPQAEKKFYPKTKKPESK) is disordered. Positions 693-723 (ALLEKKEQPEGDKKPQAEKKFYPKTKKPESK) are enriched in basic and acidic residues.

This sequence belongs to the polyribonucleotide nucleotidyltransferase family. Mg(2+) is required as a cofactor.

Its subcellular location is the cytoplasm. The catalysed reaction is RNA(n+1) + phosphate = RNA(n) + a ribonucleoside 5'-diphosphate. Functionally, involved in mRNA degradation. Catalyzes the phosphorolysis of single-stranded polyribonucleotides processively in the 3'- to 5'-direction. This is Polyribonucleotide nucleotidyltransferase from Listeria monocytogenes serotype 4a (strain HCC23).